The primary structure comprises 94 residues: Large ribosomal subunit protein bL25 (94 aa).

The protein belongs to the bacterial ribosomal protein bL25 family. In terms of assembly, part of the 50S ribosomal subunit; part of the 5S rRNA/L5/L18/L25 subcomplex. Contacts the 5S rRNA. Binds to the 5S rRNA independently of L5 and L18.

This is one of the proteins that binds to the 5S RNA in the ribosome where it forms part of the central protuberance. The chain is Large ribosomal subunit protein bL25 from Cronobacter sakazakii (strain ATCC BAA-894) (Enterobacter sakazakii).